A 60-amino-acid chain; its full sequence is Hemocyte defensin Cg-Defh2 (60 aa).

A signal peptide spans 1 to 17; the sequence is LLTLAVLLMVSADMAFA. Beta-D-GlcNAc-(1-&gt;4)-Mur2Ac(oyl-L-Ala-gamma-D-Glu-L-Lys-D-Ala-D-Ala)-di-trans,octa-cis-undecaprenyl diphosphate-binding residues include phenylalanine 19, glycine 20, and cysteine 21. 4 disulfides stabilise this stretch: cysteine 21/cysteine 42, cysteine 28/cysteine 51, cysteine 32/cysteine 53, and cysteine 37/cysteine 56. The interval 22-25 is binds to membrane interface; sequence PGDQ. Histidine 31 contributes to the beta-D-GlcNAc-(1-&gt;4)-Mur2Ac(oyl-L-Ala-gamma-D-Glu-L-Lys-D-Ala-D-Ala)-di-trans,octa-cis-undecaprenyl diphosphate binding site. Residues 43-49 form a binds to membrane interface region; that stretch reads DAVTLWL. Cysteine 51 is a binding site for beta-D-GlcNAc-(1-&gt;4)-Mur2Ac(oyl-L-Ala-gamma-D-Glu-L-Lys-D-Ala-D-Ala)-di-trans,octa-cis-undecaprenyl diphosphate.

Belongs to the invertebrate defensin family. As to expression, expressed in hemocytes.

The protein localises to the secreted. It is found in the target cell membrane. Antibacterial peptide mostly active against Gram-positive bacteria. It acts by selectively inhibiting peptidoglycan biosynthesis through complex formation with the cell wall precursor lipid II (1:1 molar ratio) thus inhibiting cell wall synthesis. It does not disrupt cell membranes. Is noticeably more potent than Cg-Defh1. This Magallana gigas (Pacific oyster) protein is Hemocyte defensin Cg-Defh2.